We begin with the raw amino-acid sequence, 448 residues long: Phosphoglucosamine mutase (448 aa).

S100 serves as the catalytic Phosphoserine intermediate. Mg(2+) contacts are provided by S100, D240, D242, and D244. S100 is subject to Phosphoserine.

It belongs to the phosphohexose mutase family. The cofactor is Mg(2+). Post-translationally, activated by phosphorylation.

The catalysed reaction is alpha-D-glucosamine 1-phosphate = D-glucosamine 6-phosphate. Its function is as follows. Catalyzes the conversion of glucosamine-6-phosphate to glucosamine-1-phosphate. The chain is Phosphoglucosamine mutase from Geobacillus thermodenitrificans (strain NG80-2).